The sequence spans 620 residues: MPIRALADIIINQIAAGEVIERPASVVKELVENALDAGAKRIEVATAGGGLNLIRVIDDGGGIPPEELPLAVARHCTSKLTSDIHDIRTLGFRGEALPSIGSVGRLTLRSRTPDADGGAEITVDGGKASAVKPVAANRGTTVEVRDLFFATPARLKFMKSERAEAAAITEVVKRIALAFPAVRFMLSGTDRTSTELPAVSADGDGLLRRLGQIIGKDFAENALPIDAEREGVFLTGYASIPSFTRGNALAQFAYVNGRPVRDKLIAGAIRGAYMDALPRDRHAVTALFISLDPALVDVNVHPAKADVRFRDPGLVRGLIVGAIRQALEGAGVRAATTGAAAMLQAFRVPEGPSRANGANDFTGRPFSGTERPRGGWSMELSPSRPLEDAFPPAANGFAEAQQVVFDIGSVVSADARAGTLEALSDLVGRPLGAARAQVHENYIVAQTEDSLVIVDQHAAHERLVYEALKDAIHSKPLPSQMLLMPEIVDLPEEDAERLCAHAEFLARLGFGVERFGPGAICVRETPSMLGEVDIAALIRDLADEIADNDTANSLKKRIDHIAATMACHGSIRSGRRLKPEEMNALLRQMEATPGSGTCNHGRPTYIELKLADIERLFGRR.

Residues 353–375 are disordered; sequence SRANGANDFTGRPFSGTERPRGG.

It belongs to the DNA mismatch repair MutL/HexB family.

Functionally, this protein is involved in the repair of mismatches in DNA. It is required for dam-dependent methyl-directed DNA mismatch repair. May act as a 'molecular matchmaker', a protein that promotes the formation of a stable complex between two or more DNA-binding proteins in an ATP-dependent manner without itself being part of a final effector complex. This Chelativorans sp. (strain BNC1) protein is DNA mismatch repair protein MutL.